The primary structure comprises 357 residues: DnaJ homolog subfamily C member 25 (357 aa).

A helical transmembrane segment spans residues 19 to 39; the sequence is WLLLAPLLLVPLLARPAEALV. The 74-residue stretch at 48 to 121 folds into the J domain; the sequence is DCYEVLGVSR…ETRKDYDYML (74 aa). A run of 2 helical transmembrane segments spans residues 147 to 167 and 241 to 261; these read VVIL…WWNS and LLLF…AWYC.

The protein belongs to the DNAJC25 family.

The protein localises to the membrane. The polypeptide is DnaJ homolog subfamily C member 25 (Dnajc25) (Mus musculus (Mouse)).